The following is a 199-amino-acid chain: dITP/XTP pyrophosphatase (199 aa).

Thr8–Lys13 is a binding site for substrate. 2 residues coordinate Mg(2+): Glu41 and Asp70. Asp70 (proton acceptor) is an active-site residue. Residues Ser71, Phe153–Asp156, Lys176, and His181–Arg182 each bind substrate.

Belongs to the HAM1 NTPase family. Homodimer. Mg(2+) serves as cofactor.

It carries out the reaction XTP + H2O = XMP + diphosphate + H(+). The enzyme catalyses dITP + H2O = dIMP + diphosphate + H(+). The catalysed reaction is ITP + H2O = IMP + diphosphate + H(+). In terms of biological role, pyrophosphatase that catalyzes the hydrolysis of nucleoside triphosphates to their monophosphate derivatives, with a high preference for the non-canonical purine nucleotides XTP (xanthosine triphosphate), dITP (deoxyinosine triphosphate) and ITP. Seems to function as a house-cleaning enzyme that removes non-canonical purine nucleotides from the nucleotide pool, thus preventing their incorporation into DNA/RNA and avoiding chromosomal lesions. This is dITP/XTP pyrophosphatase from Geobacter sulfurreducens (strain ATCC 51573 / DSM 12127 / PCA).